The sequence spans 323 residues: Fos-related antigen 2 (323 aa).

Positions 1-27 (MYQDYPGSFDTSSRGSSGSPGHPEPYS) are enriched in low complexity. The tract at residues 1-31 (MYQDYPGSFDTSSRGSSGSPGHPEPYSAGAA) is disordered. The region spanning 124–187 (EEKRRIRRER…EKLEFMLVAH (64 aa)) is the bZIP domain. A basic motif region spans residues 126-128 (KRR). The leucine-zipper stretch occupies residues 129–136 (IRRERNKL). Disordered regions lie at residues 194–214 (SPEE…TGAS) and 288–323 (ESPL…LLAL). A compositionally biased stretch (low complexity) spans 305 to 317 (SSSGDQSSDSLNS).

It belongs to the bZIP family. Fos subfamily. As to quaternary structure, heterodimer with JUN.

It localises to the nucleus. The sequence is that of Fos-related antigen 2 (FOSL2) from Gallus gallus (Chicken).